A 77-amino-acid polypeptide reads, in one-letter code: Large ribosomal subunit protein bL28 (77 aa).

The protein belongs to the bacterial ribosomal protein bL28 family.

The chain is Large ribosomal subunit protein bL28 from Cupriavidus necator (strain ATCC 17699 / DSM 428 / KCTC 22496 / NCIMB 10442 / H16 / Stanier 337) (Ralstonia eutropha).